The sequence spans 442 residues: Transducin beta-like protein 2 (442 aa).

The tract at residues E36–H71 is disordered. Over residues S52 to K65 the composition is skewed to basic residues. WD repeat units follow at residues S84 to H123, V130 to F170, K182 to N222, N224 to Q263, G273 to Q312, E323 to Y362, and V366 to V404. A Glycyl lysine isopeptide (Lys-Gly) (interchain with G-Cter in SUMO2) cross-link involves residue K164. T428 carries the phosphothreonine modification.

The sequence is that of Transducin beta-like protein 2 (Tbl2) from Mus musculus (Mouse).